The chain runs to 193 residues: MMKNMARKNQKAPWEEEEEIIWVSRTELKNDMLALQKLGEELVELKPSALAKFPLPEDLAEAIKDAQRFKNEARRRQLQYIGKLMRHIDPEPLQAALDKLRNKHSQTTALLHKLEQLRDRIVAEGDSAIEVAMEQYPEADRQRLRLLARQASKEKAGNKPPKSSREIFQLLKEAMLAKQEIEEESEDDLDSAE.

It belongs to the DarP family.

It localises to the cytoplasm. Its function is as follows. Member of a network of 50S ribosomal subunit biogenesis factors which assembles along the 30S-50S interface, preventing incorrect 23S rRNA structures from forming. Promotes peptidyl transferase center (PTC) maturation. The chain is Dual-action ribosomal maturation protein DarP from Vibrio cholerae serotype O1 (strain ATCC 39315 / El Tor Inaba N16961).